Reading from the N-terminus, the 512-residue chain is NAD(P) transhydrogenase subunit alpha (512 aa).

Topologically, residues 1–400 (MLIGVPRELL…KESKPTDPRV (400 aa)) are cytoplasmic. NAD(+)-binding positions include 125–128 (QALD), V175, 195–197 (DSR), and G225. Residues 375-394 (SAQPKQETKAAPVAEKKESK) form a disordered region. 2 helical membrane-spanning segments follow: residues 401 to 421 (KYGV…VAPA) and 422 to 442 (AFLS…YVVW). Residues 443 to 451 (NVSHALHTP) lie on the Cytoplasmic side of the membrane. A helical transmembrane segment spans residues 452–472 (LMAVTNAISGIIIVGALLQIR). Residues 473-478 (QPTGNL) are Periplasmic-facing. Residues 479-499 (FIDALAFVAILVASINIFGGF) traverse the membrane as a helical segment. Residues 500 to 512 (RVTQRMLAMFRKG) lie on the Cytoplasmic side of the membrane.

This sequence belongs to the AlaDH/PNT family. In terms of assembly, heterodimer of an alpha (PntA) and a beta (PntB) chain.

It localises to the cell inner membrane. The enzyme catalyses NAD(+) + NADPH + H(+)(in) = NADH + NADP(+) + H(+)(out). The transhydrogenation between NADH and NADP is coupled to respiration and ATP hydrolysis and functions as a proton pump across the membrane. This chain is NAD(P) transhydrogenase subunit alpha (pntA), found in Haemophilus influenzae (strain ATCC 51907 / DSM 11121 / KW20 / Rd).